The primary structure comprises 452 residues: MTRSDVIAAIATPPGRGGIGVVRVSGRNLQSLALKVAGCVPEPRRASLTRFRDENDRVIDQGIALYFPAPQSYTGEEVLELQGHGGPAVMNLLLASCLSAGARLAQPGEFTLRAFLNNKLDLAQAESVADLIDASTEEAARCAIRSLQGEFSNAIHTSVQALTDLRMLVEASLDFSEEEIEFISGRELEFRLEHIRQQLEQVFSAARQGSLLREGIWIALVGQPNVGKSSLLNRLAGEEVALVTEVPGTTRDVIRQVIEIEGVPMHLLDTAGLRETEDAIEKMGMARTRSTIDKASIVLLLVDSRVGITPEDQAILASLPPGLRLIVVHNKTDLLESPPNSTVSTATATADIWVSAKTGAGIGSLQQGLLEMIGWQPSTGEGAFMARQRHLSALTAARTHLEAACALANSLDQVELFAEELRLAQLALSSITGEFSADDLLGEIFSRFCIGK.

(6S)-5-formyl-5,6,7,8-tetrahydrofolate contacts are provided by Arg-23, Glu-80, and Lys-119. Positions 215-374 (GIWIALVGQP…LQQGLLEMIG (160 aa)) constitute a TrmE-type G domain. Position 225 (Asn-225) interacts with K(+). GTP-binding positions include 225-230 (NVGKSS), 244-250 (TEVPGTT), and 269-272 (DTAG). Ser-229 serves as a coordination point for Mg(2+). K(+) contacts are provided by Thr-244, Val-246, and Thr-249. Mg(2+) is bound at residue Thr-250. Lys-452 contacts (6S)-5-formyl-5,6,7,8-tetrahydrofolate.

Belongs to the TRAFAC class TrmE-Era-EngA-EngB-Septin-like GTPase superfamily. TrmE GTPase family. In terms of assembly, homodimer. Heterotetramer of two MnmE and two MnmG subunits. The cofactor is K(+).

The protein localises to the cytoplasm. Exhibits a very high intrinsic GTPase hydrolysis rate. Involved in the addition of a carboxymethylaminomethyl (cmnm) group at the wobble position (U34) of certain tRNAs, forming tRNA-cmnm(5)s(2)U34. This Nitrosospira multiformis (strain ATCC 25196 / NCIMB 11849 / C 71) protein is tRNA modification GTPase MnmE.